Consider the following 382-residue polypeptide: Nuclear hormone receptor family member nhr-106 (382 aa).

Residues 2 to 78 (QTTCEICEVP…MGMMPEKVKV (77 aa)) constitute a DNA-binding region (nuclear receptor). NR C4-type zinc fingers lie at residues 5 to 25 (CEIC…CRGC) and 42 to 61 (CKYS…CKSC). The 271-residue stretch at 110–380 (DVSNLITRGL…FSNPEMFIDS (271 aa)) folds into the NR LBD domain.

The protein belongs to the nuclear hormone receptor family.

The protein localises to the nucleus. Functionally, orphan nuclear receptor. The chain is Nuclear hormone receptor family member nhr-106 (nhr-106) from Caenorhabditis elegans.